A 325-amino-acid chain; its full sequence is Interferon regulatory factor 1 (325 aa).

A DNA-binding region (IRF tryptophan pentad repeat) is located at residues 5–113 (RMRMRPWLEM…SAVRVYRMLP (109 aa)). An N6-acetyllysine modification is found at Lys-78. Residues 92-165 (EEVKDQSRNK…TLPDDHSSYT (74 aa)) form a disordered region. Polar residues predominate over residues 141–157 (GDSSPDTFSDGLSSSTL). Glycyl lysine isopeptide (Lys-Gly) (interchain with G-Cter in SUMO) cross-links involve residues Lys-275 and Lys-299.

It belongs to the IRF family. Monomer. Homodimer. Interacts with EP300. Interacts with MYD88. Interacts with PIAS3. Interacts with SPOP. Post-translationally, phosphorylated by CK2 and this positively regulates its activity. In terms of processing, sumoylation represses the transcriptional activity and displays enhanced resistance to protein degradation. Sumoylated by UBE2I/UBC9 and SUMO1. Inactivates the tumor suppressor activity. Elevated levels in tumor cells. Major site is Lys-275. Sumoylation is enhanced by PIAS3. Desumoylated by SENP1 in tumor cells and appears to compete with ubiquitination on C-terminal sites. Ubiquitinated in a SPOP-depedent manner. Appears to compete with sumoylation on C-terminal sites.

The protein localises to the nucleus. It is found in the cytoplasm. Activated by MYD88. Functionally, transcriptional regulator which displays a remarkable functional diversity in the regulation of cellular responses. Regulates transcription of IFN and IFN-inducible genes, host response to viral and bacterial infections, regulation of many genes expressed during hematopoiesis, inflammation, immune responses and cell proliferation and differentiation, regulation of the cell cycle and induction of growth arrest and programmed cell death following DNA damage. Stimulates both innate and acquired immune responses through the activation of specific target genes and can act as a transcriptional activator and repressor regulating target genes by binding to an interferon-stimulated response element (ISRE) in their promoters. Has an essentail role in IFNG-dependent immunity to mycobacteria. Competes with the transcriptional repressor ZBED2 for binding to a common consensus sequence in gene promoters. Its target genes for transcriptional activation activity include: genes involved in anti-viral response, such as IFN-alpha/beta, RIGI, TNFSF10/TRAIL, ZBP1, OAS1/2, PIAS1/GBP, EIF2AK2/PKR and RSAD2/viperin; antibacterial response, such as GBP2, GBP5 and NOS2/INOS; anti-proliferative response, such as p53/TP53, LOX and CDKN1A; apoptosis, such as BBC3/PUMA, CASP1, CASP7 and CASP8; immune response, such as IL7, IL12A/B and IL15, PTGS2/COX2 and CYBB; DNA damage responses and DNA repair, such as POLQ/POLH; MHC class I expression, such as TAP1, PSMB9/LMP2, PSME1/PA28A, PSME2/PA28B and B2M and MHC class II expression, such as CIITA; metabolic enzymes, such as ACOD1/IRG1. Represses genes involved in anti-proliferative response, such as BIRC5/survivin, CCNB1, CCNE1, CDK1, CDK2 and CDK4 and in immune response, such as FOXP3, IL4, ANXA2 and TLR4. Stimulates p53/TP53-dependent transcription through enhanced recruitment of EP300 leading to increased acetylation of p53/TP53. Plays an important role in immune response directly affecting NK maturation and activity, macrophage production of IL12, Th1 development and maturation of CD8+ T-cells. Also implicated in the differentiation and maturation of dendritic cells and in the suppression of regulatory T (Treg) cells development. Acts as a tumor suppressor and plays a role not only in antagonism of tumor cell growth but also in stimulating an immune response against tumor cells. The protein is Interferon regulatory factor 1 (IRF1) of Homo sapiens (Human).